A 312-amino-acid polypeptide reads, in one-letter code: Triacylglycerol lipase (312 aa).

The N-terminal stretch at 1–25 (MNKIIILIALSLFSSSIWAGTSAHA) is a signal peptide. An AB hydrolase-1 domain is found at 37–228 (PIVLVHGLFG…VNGVRYYSWS (192 aa)). Leu44 serves as a coordination point for substrate. Residue Ser110 is the Nucleophile of the active site. His111 provides a ligand contact to substrate. Cysteines 212 and 262 form a disulfide. A Ca(2+)-binding site is contributed by Asp238. Active-site charge relay system residues include Asp256 and His278. Ca(2+) is bound by residues Asp280, Gly284, and Ile288.

This sequence belongs to the AB hydrolase superfamily. Pseudomonas lipase family. In terms of assembly, monomer. The cofactor is Ca(2+).

Its subcellular location is the secreted. The enzyme catalyses a triacylglycerol + H2O = a diacylglycerol + a fatty acid + H(+). Catalyzes the hydrolysis of triacylglycerol. This chain is Triacylglycerol lipase, found in Vibrio cholerae serotype O1 (strain ATCC 39315 / El Tor Inaba N16961).